We begin with the raw amino-acid sequence, 161 residues long: Troponin C, slow skeletal and cardiac muscles (161 aa).

Position 1 is an N-acetylmethionine (Met1). EF-hand domains follow at residues 16–51 (QKNEFKAAFDIFVLGAEDGCISTKELGKVMRMLGQN), 52–87 (PTPEELQEMIDEVDEDGSGTVDFDEFLVMMVRCMKD), 92–127 (KSEEELSDLFRMFDKNADGYIDLDELKIMLQATGET), and 128–161 (ITEDDIEELMKDGDKNNDGRIDYDEFLEFMKGVE). Positions 65, 67, 69, 71, and 76 each coordinate Ca(2+). Ser98 carries the post-translational modification Phosphoserine. Ca(2+) is bound by residues Asp105, Asn107, Asp109, Tyr111, Glu116, Asp141, Asn143, Asp145, Arg147, and Glu152.

This sequence belongs to the troponin C family.

Troponin is the central regulatory protein of striated muscle contraction. Tn consists of three components: Tn-I which is the inhibitor of actomyosin ATPase, Tn-T which contains the binding site for tropomyosin and Tn-C. The binding of calcium to Tn-C abolishes the inhibitory action of Tn on actin filaments. This chain is Troponin C, slow skeletal and cardiac muscles (TNNC1), found in Homo sapiens (Human).